The chain runs to 62 residues: MDILKKSLFLILFLGLVSISFCDGEKRQDDDEANESEEKKEIHEVEKRLRPAILVRTKGKGK.

An N-terminal signal peptide occupies residues 1-24 (MDILKKSLFLILFLGLVSISFCDG). Residues 25-46 (EKRQDDDEANESEEKKEIHEVE) constitute a propeptide that is removed on maturation. Lys-58 carries the lysine amide modification.

In terms of tissue distribution, expressed by the skin glands.

It localises to the secreted. Functionally, induces contraction of smooth muscle in isolated rat urinary bladder with an EC(50) value of 2.2nM. This chain is Sauvatide, found in Phyllomedusa sauvagei (Sauvage's leaf frog).